Consider the following 408-residue polypeptide: MDAFTENLNKLAELAIRVGLNLEEGQEIVATAPIEAVDFVRLLAEKAYENGASLFTVLYGDNLIARKRLALVPEAHLDRAPAWLYEGMAKAFHEGAARLAVSGNDPKALEGLPPERVGRAQQAQSRAYRPTLSAITEFVTNWTIVPFAHPGWAKAVFPGLPEEEAVQRLWQAIFQATRVDQEDPVAAWEAHNRVLHAKVAFLNEKRFHALHFQGPGTDLTVGLAEGHLWQGGATPTKKGRLCNPNLPTEEVFTAPHRERVEGVVRASRPLALSGQLVEGLWARFEGGVAVEVGAEKGEEVLKKLLDTDEGARRLGEVALVPADNPIAKTGLVFFDTLFDENAASHIAFGQAYAENLEGRPSGEEFRRRGGNESMVHVDWMIGSEEVDVDGLLEDGTRVPLMRRGRWVI.

Residues Glu-250, Glu-316, Glu-340, His-345, His-376, and Asp-378 each coordinate a divalent metal cation.

It belongs to the peptidase M29 family. As to quaternary structure, homodimer. Requires Co(2+) as cofactor. Zn(2+) serves as cofactor. Mg(2+) is required as a cofactor.

Functionally, metal-dependent exopeptidase. In Thermus aquaticus, this protein is Aminopeptidase T.